A 380-amino-acid chain; its full sequence is Acid phosphatase-like protein XcAP-3 (380 aa).

The first 19 residues, 1-19, serve as a signal peptide directing secretion; it reads MKATILLFLVLAVVQLSTA. 3 disulfide bridges follow: Cys-147–Cys-374, Cys-167–Cys-221, and Cys-347–Cys-351.

It belongs to the histidine acid phosphatase family.

Its subcellular location is the secreted. In terms of biological role, probably modulates blood feeding of fleas on vertebrate species by binding and sequestering different mediators involved in the host response. Binds histamine. Binds leukotriene C4. Does not bind serotonin, adrenaline, noradrenaline, leukotriene B4, leukotriene D4, leukotriene E4, ADP, and stable analogs of thromboxane A2: U-46619 and cTXA2. In Xenopsylla cheopis (Oriental rat flea), this protein is Acid phosphatase-like protein XcAP-3.